The following is a 542-amino-acid chain: MAMNVSTTIGLLNATSFASSSSINTVKILFVTLFISIVSTIVKLQKSAANKEGSKKLPLPPGPTPWPLIGNIPEMIRYRPTFRWIHQLMKDMNTDICLIRFGRTNFVPISCPVLAREILKKNDAIFSNRPKTLSAKSMSGGYLTTIVVPYNDQWKKMRKILTSEIISPARHKWLHDKRAEEADNLVFYIHNQFKANKNVNLRTATRHYGGNVIRKMVFSKRYFGKGMPDGGPGPEEIEHIDAVFTALKYLYGFCISDFLPFLLGLDLDGQEKFVLDANKTIRDYQNPLIDERIQQWKSGERKEMEDLLDVFITLKDSDGNPLLTPDEIKNQIAEIMIATVDNPSNAIEWAMGEMLNQPEILKKATEELDRVVGKDRLVQESDIPNLDYVKACAREAFRLHPVAHFNVPHVAMEDTVIGDYFIPKGSWAVLSRYGLGRNPKTWSDPLKYDPERHMNEGEVVLTEHELRFVTFSTGRRGCVASLLGSCMTTMLLARMLQCFTWTPPANVSKIDLAETLDELTPATPISAFAKPRLAPHLYPTSP.

Topologically, residues 1 to 21 (MAMNVSTTIGLLNATSFASSS) are cytoplasmic. A helical; Signal-anchor for type II membrane protein transmembrane segment spans residues 22–42 (SINTVKILFVTLFISIVSTIV). Residues 43 to 542 (KLQKSAANKE…LAPHLYPTSP (500 aa)) lie on the Lumenal side of the membrane. Residue N278 is glycosylated (N-linked (GlcNAc...) asparagine). A heme-binding site is contributed by C478. The N-linked (GlcNAc...) asparagine glycan is linked to N506.

Belongs to the cytochrome P450 family. Requires heme as cofactor. As to expression, expressed in the epidermis, the next two cortex cell layers, the endodermis and the pericycle of leaf petioles. Strong expression around the laticifers among the phloem cells and in parenchymatic cells between the protoxylem and the metaxylem cells. In the leaves, preferentially expressed in the mesophyll cells adjacent to the epidermis.

Its subcellular location is the microsome membrane. It catalyses the reaction L-valine + 2 reduced [NADPH--hemoprotein reductase] + 2 O2 = (E)-2-methylpropanal oxime + 2 oxidized [NADPH--hemoprotein reductase] + CO2 + 3 H2O + 2 H(+). The enzyme catalyses L-valine + reduced [NADPH--hemoprotein reductase] + O2 = N-hydroxy-L-valine + oxidized [NADPH--hemoprotein reductase] + H2O + 2 H(+). The catalysed reaction is N-hydroxy-L-valine + reduced [NADPH--hemoprotein reductase] + O2 = N,N-dihydroxy-L-valine + oxidized [NADPH--hemoprotein reductase] + H2O + H(+). It carries out the reaction L-isoleucine + 2 reduced [NADPH--hemoprotein reductase] + 2 O2 = (1E,2S)-2-methylbutanal oxime + 2 oxidized [NADPH--hemoprotein reductase] + CO2 + 3 H2O + 2 H(+). It catalyses the reaction L-isoleucine + reduced [NADPH--hemoprotein reductase] + O2 = N-hydroxy-L-isoleucine + oxidized [NADPH--hemoprotein reductase] + H2O + 2 H(+). The enzyme catalyses N-hydroxy-L-isoleucine + reduced [NADPH--hemoprotein reductase] + O2 = N,N-dihydroxy-L-isoleucine + oxidized [NADPH--hemoprotein reductase] + H2O + H(+). It functions in the pathway secondary metabolite biosynthesis. With respect to regulation, inhibited by tetcyclasis but not by 1-aminobenzotriazole (ABT). In terms of biological role, involved in the biosynthesis of the cyanogenic glucosides linamarin and lotaustralin. Can use L-valine or L-isoleucine as substrate, but not L-leucine, L-phenylalanine, L-tyrosine, D-valine or D-isoleucine. Catalyzes multi-step reactions starting with two successive N-hydroxylations using L-valine and L-isoleucine as substrates leading to the formation of N,N-dihydroxy-L-valine and N,N-dihydroxy-L-isoleucine, respectively; following spontaneous reactions lead to the production of (E)-2-methylpropanal oxime and (1E,2S)-2-methylbutanal oxime, respectively. This chain is Valine N-monooxygenase 1, found in Manihot esculenta (Cassava).